The sequence spans 780 residues: Pumilio domain-containing protein C4G8.03c (780 aa).

3 disordered regions span residues methionine 1–tyrosine 29, leucine 298–lysine 330, and asparagine 358–valine 411. Residues leucine 298 to proline 307 show a composition bias toward basic and acidic residues. Positions proline 311–leucine 322 are enriched in low complexity. Over residues asparagine 358–valine 382 the composition is skewed to polar residues. The 344-residue stretch at glutamate 435 to threonine 778 folds into the PUM-HD domain. Pumilio repeat units follow at residues glycine 462–proline 497, glutamate 498–asparagine 533, glycine 534–leucine 569, lysine 570–leucine 606, serine 607–asparagine 642, serine 643–glutamate 678, lysine 679–glutamine 714, glutamate 715–arginine 752, and serine 753–serine 780.

The chain is Pumilio domain-containing protein C4G8.03c from Schizosaccharomyces pombe (strain 972 / ATCC 24843) (Fission yeast).